Reading from the N-terminus, the 852-residue chain is Ubiquitin carboxyl-terminal hydrolase 4 (852 aa).

In terms of domain architecture, Rhodanese spans 172–296; sequence ASGTVLLVDV…WSNAHPDFCV (125 aa). The disordered stretch occupies residues 369–393; the sequence is RSSSSSSNINERPGSVPPQLSNGST. A USP domain is found at 488–849; the sequence is VGLVNCGNSC…NAYVLFYHRI (362 aa). Cysteine 497 (nucleophile) is an active-site residue. Histidine 806 serves as the catalytic Proton acceptor.

This sequence belongs to the peptidase C19 family.

It is found in the cytoplasm. It localises to the late endosome membrane. The catalysed reaction is Thiol-dependent hydrolysis of ester, thioester, amide, peptide and isopeptide bonds formed by the C-terminal Gly of ubiquitin (a 76-residue protein attached to proteins as an intracellular targeting signal).. RFU1 is an inhibitor of deubiquitination activity. Functionally, ubiquitin thioesterase that acts at the late endosome/prevacuolar compartment to recover ubiquitin from ubiquitinated membrane proteins en route to the vacuole. Also removes ubiquitin from soluble proteins targeted to proteasomes. Is essential to maintain a normal level of free ubiquitin. Required for promoting coordination of DNA replication and avoids DNA overreplication. This chain is Ubiquitin carboxyl-terminal hydrolase 4 (DOA4), found in Eremothecium gossypii (strain ATCC 10895 / CBS 109.51 / FGSC 9923 / NRRL Y-1056) (Yeast).